The sequence spans 170 residues: Lipoprotein signal peptidase (170 aa).

A run of 4 helical transmembrane segments spans residues 11–31 (LGWL…KAHF), 41–61 (IVVI…AAFS), 69–89 (WQRW…VVWL), and 95–115 (DDTW…GNLY). Residues aspartate 125 and aspartate 144 contribute to the active site. A helical membrane pass occupies residues 136–156 (YFPAFNFADSAITVGAIMLAL).

Belongs to the peptidase A8 family.

The protein resides in the cell inner membrane. The enzyme catalyses Release of signal peptides from bacterial membrane prolipoproteins. Hydrolyzes -Xaa-Yaa-Zaa-|-(S,diacylglyceryl)Cys-, in which Xaa is hydrophobic (preferably Leu), and Yaa (Ala or Ser) and Zaa (Gly or Ala) have small, neutral side chains.. It participates in protein modification; lipoprotein biosynthesis (signal peptide cleavage). Its function is as follows. This protein specifically catalyzes the removal of signal peptides from prolipoproteins. In Pseudomonas fluorescens, this protein is Lipoprotein signal peptidase.